A 257-amino-acid chain; its full sequence is Imidazole glycerol phosphate synthase subunit HisF (257 aa).

Active-site residues include aspartate 11 and aspartate 130.

Belongs to the HisA/HisF family. In terms of assembly, heterodimer of HisH and HisF.

It is found in the cytoplasm. It catalyses the reaction 5-[(5-phospho-1-deoxy-D-ribulos-1-ylimino)methylamino]-1-(5-phospho-beta-D-ribosyl)imidazole-4-carboxamide + L-glutamine = D-erythro-1-(imidazol-4-yl)glycerol 3-phosphate + 5-amino-1-(5-phospho-beta-D-ribosyl)imidazole-4-carboxamide + L-glutamate + H(+). It functions in the pathway amino-acid biosynthesis; L-histidine biosynthesis; L-histidine from 5-phospho-alpha-D-ribose 1-diphosphate: step 5/9. IGPS catalyzes the conversion of PRFAR and glutamine to IGP, AICAR and glutamate. The HisF subunit catalyzes the cyclization activity that produces IGP and AICAR from PRFAR using the ammonia provided by the HisH subunit. The chain is Imidazole glycerol phosphate synthase subunit HisF from Shewanella sp. (strain MR-7).